The primary structure comprises 570 residues: Sulfite reductase [NADPH] hemoprotein beta-component (570 aa).

Residues C434, C440, C479, and C483 each contribute to the [4Fe-4S] cluster site. A siroheme-binding site is contributed by C483.

It belongs to the nitrite and sulfite reductase 4Fe-4S domain family. Alpha(8)-beta(8). The alpha component is a flavoprotein, the beta component is a hemoprotein. It depends on siroheme as a cofactor. The cofactor is [4Fe-4S] cluster.

It carries out the reaction hydrogen sulfide + 3 NADP(+) + 3 H2O = sulfite + 3 NADPH + 4 H(+). The protein operates within sulfur metabolism; hydrogen sulfide biosynthesis; hydrogen sulfide from sulfite (NADPH route): step 1/1. Component of the sulfite reductase complex that catalyzes the 6-electron reduction of sulfite to sulfide. This is one of several activities required for the biosynthesis of L-cysteine from sulfate. In Escherichia coli O7:K1 (strain IAI39 / ExPEC), this protein is Sulfite reductase [NADPH] hemoprotein beta-component.